The chain runs to 292 residues: Pyruvate formate-lyase 2-activating enzyme (292 aa).

One can recognise a Radical SAM core domain in the interval 33-287 (NDGEGIRTVV…REMAERAGLQ (255 aa)). [4Fe-4S] cluster-binding residues include C47, C51, and C54. Position 53-55 (53-55 (WCA)) interacts with S-adenosyl-L-methionine. A 4Fe-4S ferredoxin-type domain is found at 62–96 (GKIQTVRREAKCLHCAKCLRDADECPSGAFERIGR). S-adenosyl-L-methionine-binding positions include G126, 175–177 (DLK), and H247.

It belongs to the organic radical-activating enzymes family. Requires [4Fe-4S] cluster as cofactor.

The protein resides in the cytoplasm. The catalysed reaction is glycyl-[formate C-acetyltransferase] + reduced [flavodoxin] + S-adenosyl-L-methionine = glycin-2-yl radical-[formate C-acetyltransferase] + semiquinone [flavodoxin] + 5'-deoxyadenosine + L-methionine + H(+). Functionally, activation of pyruvate formate-lyase 2 under anaerobic conditions by generation of an organic free radical, using S-adenosylmethionine and reduced flavodoxin as cosubstrates to produce 5'-deoxy-adenosine. The sequence is that of Pyruvate formate-lyase 2-activating enzyme (pflC) from Escherichia coli (strain K12).